The chain runs to 209 residues: ATP-dependent dethiobiotin synthetase BioD (209 aa).

13 to 18 (DIGKTV) serves as a coordination point for ATP. A Mg(2+)-binding site is contributed by Thr17. Residue Lys33 is part of the active site. Arg47 and Glu100 together coordinate Mg(2+). ATP contacts are provided by residues 100-103 (EGAG) and 184-186 (PRL).

Belongs to the dethiobiotin synthetase family. Homodimer. The cofactor is Mg(2+).

The protein resides in the cytoplasm. The enzyme catalyses (7R,8S)-7,8-diammoniononanoate + CO2 + ATP = (4R,5S)-dethiobiotin + ADP + phosphate + 3 H(+). The protein operates within cofactor biosynthesis; biotin biosynthesis; biotin from 7,8-diaminononanoate: step 1/2. In terms of biological role, catalyzes a mechanistically unusual reaction, the ATP-dependent insertion of CO2 between the N7 and N8 nitrogen atoms of 7,8-diaminopelargonic acid (DAPA, also called 7,8-diammoniononanoate) to form a ureido ring. The polypeptide is ATP-dependent dethiobiotin synthetase BioD (Rhodopseudomonas palustris (strain BisB18)).